Reading from the N-terminus, the 1205-residue chain is PAN2-PAN3 deadenylation complex catalytic subunit Pan2 (1205 aa).

4 WD repeats span residues 153–193 (DESE…QKYA), 195–231 (ETPGVTIMRQTNRFFFCGHTSGKVSLRDLRSFKVEHE), 244–280 (VHGNLLAACGFSSRLTGLACDRFLKVYDLRMMRAITP), and 328–367 (PVGPLLMTFDVSASKQALAFGDSEGCVHLWTDSPEPSFNP). Residues 368–484 (YSRETEFALP…PTGREEEPLH (117 aa)) form a linker region. A USP domain is found at 485-924 (TVSKKYRKVT…VPAILYYVKR (440 aa)). Position 784 is a phosphoserine (S784). The Exonuclease domain maps to 975-1147 (VGLDAEFVTL…EDARTALQLY (173 aa)). Residues D978, E980, D1087, and D1139 each contribute to the a divalent metal cation site. Residues 1179–1205 (WKVPEPESQSSPKSKAGLRPGALGWVG) are disordered. The span at 1184–1193 (PESQSSPKSK) shows a compositional bias: low complexity. S1189 carries the phosphoserine modification.

It belongs to the peptidase C19 family. PAN2 subfamily. As to quaternary structure, forms a heterotrimer with an asymmetric homodimer of the regulatory subunit PAN3 to form the poly(A)-nuclease (PAN) deadenylation complex. Interacts with PAN3 isoform 1/Pan3L and isoform 3/Pan3S. Interacts with ZFP36. The cofactor is a divalent metal cation.

Its subcellular location is the cytoplasm. It is found in the P-body. It localises to the nucleus. The catalysed reaction is Exonucleolytic cleavage of poly(A) to 5'-AMP.. With respect to regulation, positively regulated by the regulatory subunit PAN3. In terms of biological role, catalytic subunit of the poly(A)-nuclease (PAN) deadenylation complex, one of two cytoplasmic mRNA deadenylases involved in general and miRNA-mediated mRNA turnover. PAN specifically shortens poly(A) tails of RNA and the activity is stimulated by poly(A)-binding protein (PABP). PAN deadenylation is followed by rapid degradation of the shortened mRNA tails by the CCR4-NOT complex. Deadenylated mRNAs are then degraded by two alternative mechanisms, namely exosome-mediated 3'-5' exonucleolytic degradation, or deadenylation-dependent mRNA decaping and subsequent 5'-3' exonucleolytic degradation by XRN1. Also acts as an important regulator of the HIF1A-mediated hypoxic response. Required for HIF1A mRNA stability independent of poly(A) tail length regulation. The sequence is that of PAN2-PAN3 deadenylation complex catalytic subunit Pan2 from Rattus norvegicus (Rat).